Here is a 38-residue protein sequence, read N- to C-terminus: NLYQFGNMIQCTIPKRLSWSSFVDYGCYCGKGGSGTPV.

Residues Tyr-28, Gly-30, and Gly-32 each coordinate Ca(2+).

It belongs to the phospholipase A2 family. Group I subfamily. Ca(2+) serves as cofactor. In terms of tissue distribution, expressed by the venom gland.

Its subcellular location is the secreted. It catalyses the reaction a 1,2-diacyl-sn-glycero-3-phosphocholine + H2O = a 1-acyl-sn-glycero-3-phosphocholine + a fatty acid + H(+). Functionally, snake venom phospholipase A2 (PLA2) that inhibits neuromuscular transmission by blocking acetylcholine release from the nerve termini. PLA2 catalyzes the calcium-dependent hydrolysis of the 2-acyl groups in 3-sn-phosphoglycerides. This is Phospholipase A2 1 from Calliophis bivirgatus (Blue Malaysian coral snake).